Consider the following 160-residue polypeptide: MRCPNCNSLDTQVKDSRPTEDSSVIRRRRVCVACNFRFTTFERVQLRELTVIKRNGRRVPFDRDKLMRSVQISLRKRQVEPERVEKMVSTIVRELETGGEAEISSEVIGETVMEHLRTLDDVAYVRFASVYRNFREAKDFADVLGELSGEEEARLAAIRK.

Residues 1–11 are compositionally biased toward polar residues; the sequence is MRCPNCNSLDT. Positions 1 to 20 are disordered; sequence MRCPNCNSLDTQVKDSRPTE. A zinc finger lies at 3-34; the sequence is CPNCNSLDTQVKDSRPTEDSSVIRRRRVCVAC. The ATP-cone domain maps to 49–139; sequence LTVIKRNGRR…VYRNFREAKD (91 aa).

This sequence belongs to the NrdR family. Requires Zn(2+) as cofactor.

Its function is as follows. Negatively regulates transcription of bacterial ribonucleotide reductase nrd genes and operons by binding to NrdR-boxes. This Bradyrhizobium diazoefficiens (strain JCM 10833 / BCRC 13528 / IAM 13628 / NBRC 14792 / USDA 110) protein is Transcriptional repressor NrdR.